Here is a 445-residue protein sequence, read N- to C-terminus: Argininosuccinate synthase (445 aa).

Residues 17–25 (AFSGGLDTS) and Ala-43 contribute to the ATP site. Tyr-99 lines the L-citrulline pocket. The ATP site is built by Gly-129 and Thr-131. L-aspartate contacts are provided by Thr-131, Asn-135, and Asp-136. Asn-135 provides a ligand contact to L-citrulline. An ATP-binding site is contributed by Asp-136. L-citrulline-binding residues include Arg-139 and Ser-192. Position 194 (Asp-194) interacts with ATP. L-citrulline contacts are provided by Thr-201, Glu-203, and Glu-280.

This sequence belongs to the argininosuccinate synthase family. Type 2 subfamily. Homotetramer.

It localises to the cytoplasm. The enzyme catalyses L-citrulline + L-aspartate + ATP = 2-(N(omega)-L-arginino)succinate + AMP + diphosphate + H(+). Its pathway is amino-acid biosynthesis; L-arginine biosynthesis; L-arginine from L-ornithine and carbamoyl phosphate: step 2/3. The chain is Argininosuccinate synthase from Rhodopseudomonas palustris (strain ATCC BAA-98 / CGA009).